The sequence spans 179 residues: UPF0316 protein Ping_1367 (179 aa).

2 helical membrane-spanning segments follow: residues 28-48 (FLASFIGFFEIIIWLVASAQV) and 55-75 (WYLALAYASGFSVGNYAGISI).

This sequence belongs to the UPF0316 family.

It is found in the cell membrane. The sequence is that of UPF0316 protein Ping_1367 from Psychromonas ingrahamii (strain DSM 17664 / CCUG 51855 / 37).